Consider the following 413-residue polypeptide: Multifunctional CCA protein (413 aa).

ATP-binding residues include G8 and R11. Positions 8 and 11 each coordinate CTP. Mg(2+)-binding residues include D21 and D23. R91, R137, and R140 together coordinate ATP. CTP is bound by residues R91, R137, and R140. The HD domain maps to 228–329 (TGVHTLMTLS…VKLFDAIDAW (102 aa)).

This sequence belongs to the tRNA nucleotidyltransferase/poly(A) polymerase family. Bacterial CCA-adding enzyme type 1 subfamily. Monomer. Can also form homodimers and oligomers. Mg(2+) is required as a cofactor. It depends on Ni(2+) as a cofactor.

It carries out the reaction a tRNA precursor + 2 CTP + ATP = a tRNA with a 3' CCA end + 3 diphosphate. The catalysed reaction is a tRNA with a 3' CCA end + 2 CTP + ATP = a tRNA with a 3' CCACCA end + 3 diphosphate. In terms of biological role, catalyzes the addition and repair of the essential 3'-terminal CCA sequence in tRNAs without using a nucleic acid template. Adds these three nucleotides in the order of C, C, and A to the tRNA nucleotide-73, using CTP and ATP as substrates and producing inorganic pyrophosphate. tRNA 3'-terminal CCA addition is required both for tRNA processing and repair. Also involved in tRNA surveillance by mediating tandem CCA addition to generate a CCACCA at the 3' terminus of unstable tRNAs. While stable tRNAs receive only 3'-terminal CCA, unstable tRNAs are marked with CCACCA and rapidly degraded. The protein is Multifunctional CCA protein of Salmonella schwarzengrund (strain CVM19633).